The following is a 400-amino-acid chain: Glycerol-3-phosphate dehydrogenase [NAD(+)] 1, chloroplastic (400 aa).

The transit peptide at 1–32 directs the protein to the chloroplast; that stretch reads MRFRSFFFSSSIFSLSHSRSPSLSSSRFSSLS. NAD(+) contacts are provided by residues 61 to 66, Phe-92, Phe-149, Lys-172, and Ala-205; that span reads GSGNWG. A substrate-binding site is contributed by Lys-172. The active-site Proton acceptor is Lys-257. Residues Arg-321, Lys-350, and Gln-352 each contribute to the NAD(+) site. 321 to 322 lines the substrate pocket; sequence RN.

The protein belongs to the NAD-dependent glycerol-3-phosphate dehydrogenase family. Expressed in young seedlings, flowers and siliques. Expressed at low levels in roots.

It is found in the plastid. The protein localises to the chloroplast. It catalyses the reaction sn-glycerol 3-phosphate + NAD(+) = dihydroxyacetone phosphate + NADH + H(+). It functions in the pathway membrane lipid metabolism; glycerophospholipid metabolism. Functionally, involved in glycerolipid metabolism. In Arabidopsis thaliana (Mouse-ear cress), this protein is Glycerol-3-phosphate dehydrogenase [NAD(+)] 1, chloroplastic (DHAPRD).